A 239-amino-acid chain; its full sequence is tRNA (guanine-N(1)-)-methyltransferase (239 aa).

Residues glycine 109 and isoleucine 128–leucine 133 contribute to the S-adenosyl-L-methionine site.

Belongs to the RNA methyltransferase TrmD family. As to quaternary structure, homodimer.

The protein resides in the cytoplasm. It carries out the reaction guanosine(37) in tRNA + S-adenosyl-L-methionine = N(1)-methylguanosine(37) in tRNA + S-adenosyl-L-homocysteine + H(+). In terms of biological role, specifically methylates guanosine-37 in various tRNAs. This Thermus thermophilus (strain ATCC 27634 / DSM 579 / HB8) protein is tRNA (guanine-N(1)-)-methyltransferase.